A 425-amino-acid polypeptide reads, in one-letter code: Tol-Pal system protein TolB (425 aa).

The N-terminal stretch at 1–25 (MTRKHILSFALMTALGMTVTSTAFA) is a signal peptide.

This sequence belongs to the TolB family. As to quaternary structure, the Tol-Pal system is composed of five core proteins: the inner membrane proteins TolA, TolQ and TolR, the periplasmic protein TolB and the outer membrane protein Pal. They form a network linking the inner and outer membranes and the peptidoglycan layer.

Its subcellular location is the periplasm. Part of the Tol-Pal system, which plays a role in outer membrane invagination during cell division and is important for maintaining outer membrane integrity. In Acinetobacter baylyi (strain ATCC 33305 / BD413 / ADP1), this protein is Tol-Pal system protein TolB.